The primary structure comprises 373 residues: 4-hydroxy-3-methylbut-2-en-1-yl diphosphate synthase (flavodoxin) (373 aa).

Cysteine 270, cysteine 273, cysteine 305, and glutamate 312 together coordinate [4Fe-4S] cluster.

The protein belongs to the IspG family. [4Fe-4S] cluster serves as cofactor.

The enzyme catalyses (2E)-4-hydroxy-3-methylbut-2-enyl diphosphate + oxidized [flavodoxin] + H2O + 2 H(+) = 2-C-methyl-D-erythritol 2,4-cyclic diphosphate + reduced [flavodoxin]. It functions in the pathway isoprenoid biosynthesis; isopentenyl diphosphate biosynthesis via DXP pathway; isopentenyl diphosphate from 1-deoxy-D-xylulose 5-phosphate: step 5/6. Converts 2C-methyl-D-erythritol 2,4-cyclodiphosphate (ME-2,4cPP) into 1-hydroxy-2-methyl-2-(E)-butenyl 4-diphosphate. The polypeptide is 4-hydroxy-3-methylbut-2-en-1-yl diphosphate synthase (flavodoxin) (Serratia proteamaculans (strain 568)).